We begin with the raw amino-acid sequence, 158 residues long: C-type lectin (158 aa).

The N-terminal stretch at 1–23 (MWQFTVVSLGWLAVFLSLSGAKG) is a signal peptide. Cystine bridges form between Cys-26–Cys-37, Cys-54–Cys-154, and Cys-129–Cys-146. Residues 33-155 (RNGVCNKLFP…CASLHPFICQ (123 aa)) form the C-type lectin domain. The Mannose-binding signature appears at 119–121 (EPN). Residues Glu-127, Asn-142, and Asp-143 each coordinate Ca(2+).

It belongs to the true venom lectin family. Expressed by the venom gland.

It is found in the secreted. Its function is as follows. Mannose-binding lectin which recognizes specific carbohydrate structures and agglutinates a variety of animal cells by binding to cell-surface glycoproteins and glycolipids. May be a calcium-dependent lectin. The sequence is that of C-type lectin from Cerberus rynchops (Dog-faced water snake).